Here is a 532-residue protein sequence, read N- to C-terminus: T-complex protein 1 subunit epsilon (532 aa).

It belongs to the TCP-1 chaperonin family. As to quaternary structure, component of the T-complex protein 1 (TCP1) complex.

The protein localises to the cytoplasm. In terms of biological role, molecular chaperone; assists the folding of proteins upon ATP hydrolysis. This Encephalitozoon cuniculi (strain GB-M1) (Microsporidian parasite) protein is T-complex protein 1 subunit epsilon (CCT5).